The primary structure comprises 414 residues: TAR DNA-binding protein 43 (414 aa).

Glycyl lysine isopeptide (Lys-Gly) (interchain with G-Cter in SUMO2) cross-links involve residues lysine 79, lysine 84, lysine 95, lysine 102, and lysine 181. RRM domains are found at residues 104–200 (SDLI…RCTE) and 191–262 (RKVF…NAEP). Serine 183 is modified (phosphoserine). The interaction with UBQLN2 stretch occupies residues 216–414 (DVMDVFIPKP…MDSKSSGWGM (199 aa)). Positions 261–274 (EPKHNSNRQLERSG) are enriched in basic and acidic residues. Disordered stretches follow at residues 261-303 (EPKH…GNNQ) and 341-373 (ASQQ…GNNS). A Glycyl lysine isopeptide (Lys-Gly) (interchain with G-Cter in SUMO2) cross-link involves residue lysine 263. The span at 275 to 303 (RFGGNPGGFGNQGGFGNSRGGGAGLGNNQ) shows a compositional bias: gly residues. Serine 292 carries the phosphoserine modification. Arginine 293 is modified (omega-N-methylarginine). The span at 342–358 (SQQNQSGPSGNNQNQGN) shows a compositional bias: low complexity.

In terms of assembly, monomer and component of the SFPQ-NONO complex, which is probably a heterotetramer of two 52 kDa (NONO) and two 100 kDa (SFPQ) subunits. NONO is a component of spliceosome and U5.4/6 snRNP complexes. Interacts with CPNE4 (via VWFA domain). Forms heterodimers with PSPC1; this involves formation of a coiled coil domain by helices from both proteins. Part of complex consisting of SFPQ, NONO and MATR3. Part of a complex consisting of SFPQ, NONO and NR5A1. Part of a complex consisting of SFPQ, NONO and TOP1. Interacts with SPI1. Interacts with RNF43. Interacts with PER1 and PER2. Part of the HDP-RNP complex composed of at least HEXIM1, PRKDC, XRCC5, XRCC6, paraspeckle proteins (SFPQ, NONO, PSPC1, RBM14, and MATR3) and NEAT1 RNA. Interacts (via second RRM domain) with WASL; the interaction is direct. Component of a multiprotein complex with WASL and SFPQ. Interacts with ERCC6. Interacts (via DNA-binding domain) with TET1. Post-translationally, hyperphosphorylated. Ubiquitinated.

The protein localises to the nucleus. Its subcellular location is the nucleolus. It is found in the nucleus speckle. It localises to the chromosome. The protein resides in the mitochondrion. Functionally, DNA- and RNA binding protein, involved in several nuclear processes. Binds the conventional octamer sequence in double-stranded DNA. Also binds single-stranded DNA and RNA at a site independent of the duplex site. Involved in pre-mRNA splicing, probably as a heterodimer with SFPQ. Interacts with U5 snRNA, probably by binding to a purine-rich sequence located on the 3' side of U5 snRNA stem 1b. Together with PSPC1, required for the formation of nuclear paraspeckles. The SFPQ-NONO heteromer associated with MATR3 may play a role in nuclear retention of defective RNAs. The SFPQ-NONO heteromer may be involved in DNA unwinding by modulating the function of topoisomerase I/TOP1. The SFPQ-NONO heteromer may be involved in DNA non-homologous end joining (NHEJ) required for double-strand break repair and V(D)J recombination and may stabilize paired DNA ends. In vitro, the complex strongly stimulates DNA end joining, binds directly to the DNA substrates and cooperates with the Ku70/G22P1-Ku80/XRCC5 (Ku) dimer to establish a functional preligation complex. NONO is involved in transcriptional regulation. The SFPQ-NONO-NR5A1 complex binds to the CYP17 promoter and regulates basal and cAMP-dependent transcriptional activity. NONO binds to an enhancer element in long terminal repeats of endogenous intracisternal A particles (IAPs) and activates transcription. Regulates the circadian clock by repressing the transcriptional activator activity of the CLOCK-BMAL1 heterodimer. Important for the functional organization of GABAergic synapses. Plays a specific and important role in the regulation of synaptic RNAs and GPHN/gephyrin scaffold structure, through the regulation of GABRA2 transcript. Plays a key role during neuronal differentiation by recruiting TET1 to genomic loci and thereby regulating 5-hydroxymethylcytosine levels. Plays a role in the regulation of DNA virus-mediated innate immune response by assembling into the HDP-RNP complex, a complex that serves as a platform for IRF3 phosphorylation and subsequent innate immune response activation through the cGAS-STING pathway. The polypeptide is TAR DNA-binding protein 43 (TARDBP) (Pongo abelii (Sumatran orangutan)).